The primary structure comprises 274 residues: Ribose-5-phosphate isomerase (274 aa).

The protein belongs to the ribose 5-phosphate isomerase family.

It localises to the cytoplasm. It carries out the reaction aldehydo-D-ribose 5-phosphate = D-ribulose 5-phosphate. It participates in carbohydrate degradation; pentose phosphate pathway; D-ribose 5-phosphate from D-ribulose 5-phosphate (non-oxidative stage): step 1/1. The polypeptide is Ribose-5-phosphate isomerase (rki1) (Schizosaccharomyces pombe (strain 972 / ATCC 24843) (Fission yeast)).